The sequence spans 622 residues: Dopamine beta-hydroxylase (622 aa).

Residues 1–20 lie on the Cytoplasmic side of the membrane; sequence MQAHLSHQPCWSSLPSPSVR. A helical; Signal-anchor for type II membrane protein membrane pass occupies residues 21-41; that stretch reads EAASMYGTAVAIFLVILVAAL. At 42–621 the chain is on the intragranular side; the sequence is RGSEPPESPF…TVPITTEADA (580 aa). Positions 61 to 177 constitute a DOMON domain; it reads GILELSWNVS…DTVHLVYGIL (117 aa). Asn68 and Asn188 each carry an N-linked (GlcNAc...) asparagine glycan. 6 disulfides stabilise this stretch: Cys158-Cys600, Cys236-Cys287, Cys273-Cys299, Cys394-Cys507, Cys398-Cys569, and Cys470-Cys492. Residue Tyr234 is part of the active site. 2 residues coordinate Cu(2+): His266 and His267. His337 provides a ligand contact to Cu(2+). Ser350 carries the post-translational modification Phosphoserine; by CaMK. Residue His416 is part of the active site. Cu(2+)-binding residues include His416 and His418. The N-linked (GlcNAc...) asparagine glycan is linked to Asn476. A Cu(2+)-binding site is contributed by Met491. Asn570 is a glycosylation site (N-linked (GlcNAc...) asparagine). Residues 594–622 are disordered; sequence EEPTPRCPIRQTQSPANPTVPITTEADAE. Residues 603-615 are compositionally biased toward polar residues; the sequence is RQTQSPANPTVPI.

It belongs to the copper type II ascorbate-dependent monooxygenase family. Homotetramer; composed of two disulfide-linked dimers. Cu(2+) is required as a cofactor. Proteolytic cleavage after the membrane-anchor leads to the release of the soluble form. Post-translationally, N-glycosylated. As to expression, detected in adrenal gland secretory granules (at protein level). Detected in adrenal gland.

It localises to the cytoplasmic vesicle. Its subcellular location is the secretory vesicle lumen. The protein resides in the secretory vesicle. It is found in the chromaffin granule lumen. The protein localises to the secretory vesicle membrane. It localises to the chromaffin granule membrane. The catalysed reaction is dopamine + 2 L-ascorbate + O2 = (R)-noradrenaline + 2 monodehydro-L-ascorbate radical + H2O. The protein operates within catecholamine biosynthesis; (R)-noradrenaline biosynthesis; (R)-noradrenaline from dopamine: step 1/1. Its function is as follows. Catalyzes the hydroxylation of dopamine to noradrenaline (also known as norepinephrine), and is thus vital for regulation of these neurotransmitters. This Mus musculus (Mouse) protein is Dopamine beta-hydroxylase (Dbh).